A 299-amino-acid polypeptide reads, in one-letter code: 4-diphosphocytidyl-2-C-methyl-D-erythritol kinase (299 aa).

Lys11 is an active-site residue. 94–104 (PQGGGLGGGSS) is a binding site for ATP. The active site involves Asp136.

It belongs to the GHMP kinase family. IspE subfamily.

The enzyme catalyses 4-CDP-2-C-methyl-D-erythritol + ATP = 4-CDP-2-C-methyl-D-erythritol 2-phosphate + ADP + H(+). It functions in the pathway isoprenoid biosynthesis; isopentenyl diphosphate biosynthesis via DXP pathway; isopentenyl diphosphate from 1-deoxy-D-xylulose 5-phosphate: step 3/6. Functionally, catalyzes the phosphorylation of the position 2 hydroxy group of 4-diphosphocytidyl-2C-methyl-D-erythritol. This is 4-diphosphocytidyl-2-C-methyl-D-erythritol kinase from Bordetella parapertussis (strain 12822 / ATCC BAA-587 / NCTC 13253).